Consider the following 889-residue polypeptide: Mitochondrial intermediate peptidase (889 aa).

A mitochondrion-targeting transit peptide spans 1-30 (MASTSKNAQRAAASVAHSYHVCLARRMSRL). A disordered region spans residues 60-112 (SSSLAAQRVQRPTSAGPILTNPISDHEKDNDELRSLFDAPPTSSSANHLRSSG). Basic and acidic residues predominate over residues 83 to 94 (SDHEKDNDELRS). Residues 100 to 112 (PTSSSANHLRSSG) are compositionally biased toward polar residues. His670 contributes to the Zn(2+) binding site. Glu671 is an active-site residue. Residues His674 and His677 each contribute to the Zn(2+) site.

Belongs to the peptidase M3 family. The cofactor is Zn(2+).

The protein resides in the mitochondrion matrix. The catalysed reaction is Release of an N-terminal octapeptide as second stage of processing of some proteins imported into the mitochondrion.. In terms of biological role, cleaves proteins, imported into the mitochondrion, to their mature size. While most mitochondrial precursor proteins are processed to the mature form in one step by mitochondrial processing peptidase (MPP), the sequential cleavage by MIP of an octapeptide after initial processing by MPP is a required step for a subgroup of nuclear-encoded precursor proteins destined for the matrix or the inner membrane. The protein is Mitochondrial intermediate peptidase (OCT1) of Mycosarcoma maydis (Corn smut fungus).